The primary structure comprises 324 residues: Acetyl-coenzyme A carboxylase carboxyl transferase subunit alpha (324 aa).

A CoA carboxyltransferase C-terminal domain is found at 44–297 (LEERAKQLRY…KAALLRNLAE (254 aa)).

Belongs to the AccA family. In terms of assembly, acetyl-CoA carboxylase is a heterohexamer composed of biotin carboxyl carrier protein (AccB), biotin carboxylase (AccC) and two subunits each of ACCase subunit alpha (AccA) and ACCase subunit beta (AccD).

It localises to the cytoplasm. The enzyme catalyses N(6)-carboxybiotinyl-L-lysyl-[protein] + acetyl-CoA = N(6)-biotinyl-L-lysyl-[protein] + malonyl-CoA. It participates in lipid metabolism; malonyl-CoA biosynthesis; malonyl-CoA from acetyl-CoA: step 1/1. Its function is as follows. Component of the acetyl coenzyme A carboxylase (ACC) complex. First, biotin carboxylase catalyzes the carboxylation of biotin on its carrier protein (BCCP) and then the CO(2) group is transferred by the carboxyltransferase to acetyl-CoA to form malonyl-CoA. The sequence is that of Acetyl-coenzyme A carboxylase carboxyl transferase subunit alpha from Thermosynechococcus vestitus (strain NIES-2133 / IAM M-273 / BP-1).